A 151-amino-acid polypeptide reads, in one-letter code: Mediator of RNA polymerase II transcription subunit 32 (151 aa).

The disordered stretch occupies residues 128-151 (GVAPGSVHSSSTGFDSRFSEDSTQ).

This sequence belongs to the mediator complex subunit 32 family. Oligomers. Component of the Mediator complex. Interacts with MED6. Interacts with GEBPL.

The protein resides in the nucleus. Its function is as follows. Component of the Mediator complex, a coactivator involved in the regulated transcription of nearly all RNA polymerase II-dependent genes. Mediator functions as a bridge to convey information from gene-specific regulatory proteins to the basal RNA polymerase II transcription machinery. The Mediator complex, having a compact conformation in its free form, is recruited to promoters by direct interactions with regulatory proteins and serves for the assembly of a functional pre-initiation complex with RNA polymerase II and the general transcription factors. This Arabidopsis thaliana (Mouse-ear cress) protein is Mediator of RNA polymerase II transcription subunit 32 (MED32).